A 655-amino-acid chain; its full sequence is Integrin beta-5 (655 aa).

Residues 1–234 form the VWFA domain; that stretch reads DLSLSMKDDL…QLIINAYNSI (234 aa). The Extracellular segment spans residues 1-575; that stretch reads DLSLSMKDDL…REPECGNTPN (575 aa). S3 and S5 together coordinate Mg(2+). Positions 5, 8, 9, and 40 each coordinate Ca(2+). C58 and C67 form a disulfide bridge. Ca(2+) is bound by residues N98, D100, P102, and E103. A Mg(2+)-binding site is contributed by E103. A disulfide bridge connects residues C115 and C156. Residue N203 is glycosylated (N-linked (GlcNAc...) asparagine). G218 is a Ca(2+) binding site. 13 cysteine pairs are disulfide-bonded: C257/C269, C289/C317, C321/C340, C332/C343, C345/C354, C356/C386, C369/C384, C378/C389, C391/C404, C406/C427, C411/C425, C419/C430, and C432/C441. N316 carries N-linked (GlcNAc...) asparagine glycosylation. I-EGF domains lie at 321–355, 356–405, 406–442, and 443–482; these read CSVG…TRCE, CQDG…PFCE, CDNF…DNCN, and CSTD…EMCE. N-linked (GlcNAc...) asparagine glycosylation occurs at N408. N-linked (GlcNAc...) asparagine glycosylation occurs at N442. Cystine bridges form between C443–C466, C450–C464, C458–C469, C471–C481, C484–C487, C491–C538, C497–C517, C500–C513, and C546–C570. N-linked (GlcNAc...) asparagine glycans are attached at residues N510 and N561. A helical membrane pass occupies residues 576–598; that stretch reads AMTILLAVVGSILLVGLALLAIW. Residues 599 to 655 lie on the Cytoplasmic side of the membrane; that stretch reads KLLVTIHDRREFAKFQSERSRARYEMASNPLYRKPISTHTVDFTFNKFNKSYNGTVD. A Phosphoserine modification is found at S626.

The protein belongs to the integrin beta chain family. In terms of assembly, heterodimer of an alpha and a beta subunit. Beta-5 (ITGB5) associates with alpha-V (ITGAV). Interacts with MYO10. Interacts with DAB2. Integrin ITGAV:ITGB5 interacts with FBLN5 (via N-terminus). ITGAV:ITGB5 interacts with CCN3. Interacts with tensin TNS3; TNS3 also interacts with PEAK1, thus acting as an adapter molecule to bridge the association of PEAK1 with ITGB5.

It localises to the cell membrane. In terms of biological role, integrin alpha-V/beta-5 (ITGAV:ITGB5) is a receptor for fibronectin. It recognizes the sequence R-G-D in its ligand. The polypeptide is Integrin beta-5 (ITGB5) (Papio cynocephalus (Yellow baboon)).